The sequence spans 145 residues: Acidic phospholipase A2 S1-11 (145 aa).

The signal sequence occupies residues 1-19; that stretch reads MYPAHLLVLLAVCVSLLGA. Positions 20 to 27 are excised as a propeptide; that stretch reads SDMPPQPL. 5 disulfide bridges follow: Cys38/Cys99, Cys54/Cys144, Cys56/Cys72, Cys71/Cys127, and Cys106/Cys118. Residues Tyr55, Gly57, and Gly59 each contribute to the Ca(2+) site. The active site involves His75. Asp76 is a binding site for Ca(2+). Asp121 is a catalytic residue.

This sequence belongs to the phospholipase A2 family. Group I subfamily. D49 sub-subfamily. Ca(2+) is required as a cofactor. In terms of processing, this enzyme lacks two of the seven disulfide bonds found in similar PLA2 proteins. As to expression, expressed by the venom gland.

It localises to the secreted. The enzyme catalyses a 1,2-diacyl-sn-glycero-3-phosphocholine + H2O = a 1-acyl-sn-glycero-3-phosphocholine + a fatty acid + H(+). Functionally, snake venom phospholipase A2 (PLA2) that inhibits collagen-induced platelet aggregation. PLA2 catalyzes the calcium-dependent hydrolysis of the 2-acyl groups in 3-sn-phosphoglycerides. In Austrelaps superbus (Lowland copperhead snake), this protein is Acidic phospholipase A2 S1-11.